The chain runs to 618 residues: ADP,ATP carrier protein 2, chloroplastic (618 aa).

A chloroplast-targeting transit peptide spans 1-76; it reads MEGLIQTRGI…KERSRGFICK (76 aa). The residue at position 77 (Ala77) is an N-acetylalanine. Helical transmembrane passes span 110–130, 148–168, 179–199, 237–257, 270–289, 312–332, 368–388, 401–421, 441–461, 464–484, and 542–562; these read LKKI…YTIL, IIPF…MLLY, ALFY…GFVM, LFYV…FWGF, FYPL…GRTV, AMMS…WWVN, LATL…TWKS, SAFM…MMLL, VLLL…PFAP, AKLG…QNIF, and LANS…AWLA. The segment at 586-618 is disordered; the sequence is RASSVKIPVVSQEDAPSGETTSQLSEKSTPTGI. Over residues 603-618 the composition is skewed to polar residues; it reads GETTSQLSEKSTPTGI.

The protein belongs to the ADP/ATP translocase tlc (TC 2.A.12.2) family.

Its subcellular location is the plastid. The protein resides in the chloroplast membrane. The chain is ADP,ATP carrier protein 2, chloroplastic (AATP2) from Arabidopsis thaliana (Mouse-ear cress).